The following is a 343-amino-acid chain: Aspartate carbamoyltransferase catalytic subunit (343 aa).

Over residues 1–14 (MTTDTTGRTGNPAA) the composition is skewed to polar residues. Positions 1 to 20 (MTTDTTGRTGNPAATASPDR) are disordered. Positions 91 and 92 each coordinate carbamoyl phosphate. Lys119 contacts L-aspartate. Carbamoyl phosphate-binding residues include Arg141, His171, and Gln174. 2 residues coordinate L-aspartate: Arg204 and Arg259. The carbamoyl phosphate site is built by Gly300 and Pro301.

This sequence belongs to the aspartate/ornithine carbamoyltransferase superfamily. ATCase family. In terms of assembly, heterododecamer (2C3:3R2) of six catalytic PyrB chains organized as two trimers (C3), and six regulatory PyrI chains organized as three dimers (R2).

The enzyme catalyses carbamoyl phosphate + L-aspartate = N-carbamoyl-L-aspartate + phosphate + H(+). It functions in the pathway pyrimidine metabolism; UMP biosynthesis via de novo pathway; (S)-dihydroorotate from bicarbonate: step 2/3. Catalyzes the condensation of carbamoyl phosphate and aspartate to form carbamoyl aspartate and inorganic phosphate, the committed step in the de novo pyrimidine nucleotide biosynthesis pathway. The chain is Aspartate carbamoyltransferase catalytic subunit from Burkholderia lata (strain ATCC 17760 / DSM 23089 / LMG 22485 / NCIMB 9086 / R18194 / 383).